Reading from the N-terminus, the 428-residue chain is Enolase (428 aa).

Glutamine 165 is a binding site for (2R)-2-phosphoglycerate. The active-site Proton donor is glutamate 207. Positions 244, 285, and 312 each coordinate Mg(2+). (2R)-2-phosphoglycerate-binding residues include lysine 337, arginine 366, serine 367, and lysine 388. Residue lysine 337 is the Proton acceptor of the active site.

The protein belongs to the enolase family. In terms of assembly, component of the RNA degradosome, a multiprotein complex involved in RNA processing and mRNA degradation. Requires Mg(2+) as cofactor.

The protein localises to the cytoplasm. It is found in the secreted. It localises to the cell surface. The catalysed reaction is (2R)-2-phosphoglycerate = phosphoenolpyruvate + H2O. It functions in the pathway carbohydrate degradation; glycolysis; pyruvate from D-glyceraldehyde 3-phosphate: step 4/5. Its function is as follows. Catalyzes the reversible conversion of 2-phosphoglycerate (2-PG) into phosphoenolpyruvate (PEP). It is essential for the degradation of carbohydrates via glycolysis. This chain is Enolase, found in Coxiella burnetii (strain Dugway 5J108-111).